A 374-amino-acid polypeptide reads, in one-letter code: tRNA 2-selenouridine synthase (374 aa).

The region spanning 12–136 (FLRDVPMLDT…MRGFLLQTID (125 aa)) is the Rhodanese domain. The active-site S-selanylcysteine intermediate is Cys-95.

Belongs to the SelU family. In terms of assembly, monomer.

It catalyses the reaction 5-methylaminomethyl-2-thiouridine(34) in tRNA + selenophosphate + (2E)-geranyl diphosphate + H2O + H(+) = 5-methylaminomethyl-2-selenouridine(34) in tRNA + (2E)-thiogeraniol + phosphate + diphosphate. The catalysed reaction is 5-methylaminomethyl-2-thiouridine(34) in tRNA + (2E)-geranyl diphosphate = 5-methylaminomethyl-S-(2E)-geranyl-thiouridine(34) in tRNA + diphosphate. The enzyme catalyses 5-methylaminomethyl-S-(2E)-geranyl-thiouridine(34) in tRNA + selenophosphate + H(+) = 5-methylaminomethyl-2-(Se-phospho)selenouridine(34) in tRNA + (2E)-thiogeraniol. It carries out the reaction 5-methylaminomethyl-2-(Se-phospho)selenouridine(34) in tRNA + H2O = 5-methylaminomethyl-2-selenouridine(34) in tRNA + phosphate. Its function is as follows. Involved in the post-transcriptional modification of the uridine at the wobble position (U34) of tRNA(Lys), tRNA(Glu) and tRNA(Gln). Catalyzes the conversion of 2-thiouridine (S2U-RNA) to 2-selenouridine (Se2U-RNA). Acts in a two-step process involving geranylation of 2-thiouridine (S2U) to S-geranyl-2-thiouridine (geS2U) and subsequent selenation of the latter derivative to 2-selenouridine (Se2U) in the tRNA chain. This is tRNA 2-selenouridine synthase from Bordetella petrii (strain ATCC BAA-461 / DSM 12804 / CCUG 43448).